The chain runs to 271 residues: Undecaprenyl-diphosphatase (271 aa).

The next 8 membrane-spanning stretches (helical) occupy residues 5–25, 45–65, 86–106, 114–134, 149–169, 189–209, 226–246, and 251–271; these read YALFVAFVLGIVEGLTEFLPV, AATFEVVIQMGSILAVVAVFW, TLSLVHIILGMLPAVIIGLGI, LFGPETVMYALVAGGILLIIA, ISYKQAFGIGLFQCLALWPGF, AAEFSFILAVPMMVAASGLDL, VGFITAFVVAMIAIKTFLALI, and FIPFAIYRFIVAFAVYLVFVA.

This sequence belongs to the UppP family.

It localises to the cell inner membrane. It carries out the reaction di-trans,octa-cis-undecaprenyl diphosphate + H2O = di-trans,octa-cis-undecaprenyl phosphate + phosphate + H(+). Catalyzes the dephosphorylation of undecaprenyl diphosphate (UPP). Confers resistance to bacitracin. The chain is Undecaprenyl-diphosphatase from Aeromonas salmonicida (strain A449).